Consider the following 185-residue polypeptide: Elongation factor P (185 aa).

Belongs to the elongation factor P family.

The protein resides in the cytoplasm. It functions in the pathway protein biosynthesis; polypeptide chain elongation. Its function is as follows. Involved in peptide bond synthesis. Stimulates efficient translation and peptide-bond synthesis on native or reconstituted 70S ribosomes in vitro. Probably functions indirectly by altering the affinity of the ribosome for aminoacyl-tRNA, thus increasing their reactivity as acceptors for peptidyl transferase. In Clostridium novyi (strain NT), this protein is Elongation factor P.